The following is a 174-amino-acid chain: Co-chaperone protein HscB homolog (174 aa).

A J domain is found at 2 to 74 (NYFELFKFSP…IRRAEHLLSL (73 aa)).

Belongs to the HscB family. Interacts with HscA and stimulates its ATPase activity.

Functionally, co-chaperone involved in the maturation of iron-sulfur cluster-containing proteins. Seems to help targeting proteins to be folded toward HscA. This chain is Co-chaperone protein HscB homolog, found in Shewanella sp. (strain W3-18-1).